Consider the following 1344-residue polypeptide: Centrosomal P4.1-associated protein (1344 aa).

Disordered regions lie at residues 67-123 (SSEE…NNDL) and 187-225 (PGTL…ASNV). Over residues 211–225 (SYSNPTQENSCASNV) the composition is skewed to polar residues. The residue at position 248 (serine 248) is a Phosphoserine. The tract at residues 257-300 (QEAHVKRNDLKEESPAHPSGEGALPRWEKKMGRSQEGKDVNLQK) is disordered. Basic and acidic residues-rich tracts occupy residues 259 to 271 (AHVK…EESP) and 282 to 297 (RWEK…KDVN). Position 304 is a phosphoserine (serine 304). The tract at residues 307 to 382 (VVNIDERPIK…FTNAKSKFQK (76 aa)) is alpha/beta-tubulin binding. Disordered stretches follow at residues 347-407 (QEAE…DRQH) and 425-470 (TVKK…KKRD). The segment covering 388 to 398 (LASTQSPSEDQ) has biased composition (polar residues). At serine 528 the chain carries Phosphoserine. 2 positions are modified to phosphoserine; by PLK2: serine 577 and serine 583. 2 disordered regions span residues 600–626 (RLSS…SNCS) and 672–735 (TSEI…DTGA). A compositionally biased stretch (basic and acidic residues) spans 709-720 (VGDRVFSNREDS). The residue at position 748 (serine 748) is a Phosphoserine. Residues 887–1344 (QPPEFMVCFI…DGNVLMDTEM (458 aa)) are interaction with STIL. A disordered region spans residues 1105–1133 (QGNLSRRIKSAPPRDLGSSDKGQAALPRE).

This sequence belongs to the TCP10 family. Forms homodimers. Associates with microtubules plus ends; binds to beta-tubulin subunits exposed on microtubule outer surface at its distal tip; also associates with microtubule lattice. Associated with the gamma-tubulin complex. Interacts with the head domain of EPB41. Interacts with LYST. Interacts with CEP152 (via C-terminus). Interacts with STIL. Forms a complex with STIL and SASS6. Post-translationally, phosphorylation at Ser-577 and Ser-583 by PLK2 is required for procentriole formation and centriole elongation. Phosphorylation by PLK2 oscillates during the cell cycle: it increases at G1/S transition and decreases during the exit from mitosis. Phosphorylation at Ser-583 is also mediated by PLK4 but is not a critical step in PLK4 function in procentriole assembly.

Its subcellular location is the cytoplasm. The protein localises to the cytoskeleton. It is found in the microtubule organizing center. The protein resides in the centrosome. It localises to the centriole. In terms of biological role, plays an important role in cell division and centrosome function by participating in centriole duplication. Inhibits microtubule nucleation from the centrosome. Involved in the regulation of slow processive growth of centriolar microtubules. Acts as microtubule plus-end tracking protein that stabilizes centriolar microtubules and inhibits microtubule polymerization and extension from the distal ends of centrioles. Required for centriole elongation and for STIL-mediated centriole amplification. Required for the recruitment of CEP295 to the proximal end of new-born centrioles at the centriolar microtubule wall during early S phase in a PLK4-dependent manner. May be involved in the control of centriolar-microtubule growth by acting as a regulator of tubulin release. In Mus musculus (Mouse), this protein is Centrosomal P4.1-associated protein (Cpap).